Here is a 204-residue protein sequence, read N- to C-terminus: Large ribosomal subunit protein bL9 (204 aa).

The interval 180 to 204 is disordered; sequence DDIGGAASDDEGDAPAAAADEEESK. Residues 187–204 are compositionally biased toward acidic residues; the sequence is SDDEGDAPAAAADEEESK.

Belongs to the bacterial ribosomal protein bL9 family.

Functionally, binds to the 23S rRNA. The polypeptide is Large ribosomal subunit protein bL9 (Ruegeria sp. (strain TM1040) (Silicibacter sp.)).